The chain runs to 949 residues: MESTLSAFSTVKATAMARSSGGPSLPLLTISKALNRHFTGARHLHPLLLARCSPSVRRLGGFHGSRFTSSNSALRSLGAAVLPVIRHRLECLSSSSPSFRSISSGGGSGFGGYNGGSGGGGGGGSESGDSKSKLGANASDGVSVPSSDIIILDVGGMTCGGCSASVKKILESQPQVASASVNLTTETAIVWPVPEAKSVPDWQKSLGETLANHLTNCGFQSTPRDLVTENFFKVFETKTKDKQARLKESGRELAVSWALCAVCLVGHLTHFLGVNAPWIHAIHSTGFHVSLCLITLLGPGRKLVLDGIKSLLKGSPNMNTLVGLGALSSFSVSSLAAMIPKLGWKTFFEEPVMLIAFVLLGRNLEQRAKIKATSDMTGLLSVLPSKARLLLDGDLQNSTVEVPCNSLSVGDLVVILPGDRVPADGVVKSGRSTIDESSFTGEPLPVTKESGSQVAAGSINLNGTLTVEVHRSGGETAVGDIIRLVEEAQSREAPVQQLVDKVAGRFTYGVMALSAATFTFWNLFGAHVLPSALHNGSPMSLALQLSCSVLVVACPCALGLATPTAMLVGTSLGARRGLLLRGGDILEKFSLVDTVVFDKTGTLTKGHPVVTEVIIPENPRHNLNDTWSEVEVLMLAAAVESNTTHPVGKAIVKAARARNCQTMKAEDGTFTEEPGSGAVAIVNNKRVTVGTLEWVKRHGATGNSLLALEEHEINNQSVVYIGVDNTLAAVIRFEDKVREDAAQVVENLTRQGIDVYMLSGDKRNAANYVASVVGINHERVIAGVKPAEKKNFINELQKNKKIVAMVGDGINDAAALASSNVGVAMGGGAGAASEVSPVVLMGNRLTQLLDAMELSRQTMKTVKQNLWWAFGYNIVGIPIAAGVLLPLTGTMLTPSMAGALMGVSSLGVMTNSLLLRYRFFSNRNDKNVKPEPKEGTKQPHENTRWKQSS.

Residues Met-1–Ser-103 constitute a chloroplast transit peptide. The segment covering Tyr-113 to Glu-126 has biased composition (gly residues). The tract at residues Tyr-113–Val-142 is disordered. Residues Asp-148–Thr-222 enclose the HMA domain. Cu(+)-binding residues include Cys-159 and Cys-162. Helical transmembrane passes span Leu-253 to Val-274, Phe-287 to Asp-306, Gly-314 to Ser-334, Glu-349 to Lys-369, Val-502 to Phe-524, and Leu-543 to Leu-560. Asp-598 serves as the catalytic 4-aspartylphosphate intermediate. Gly-807–Ala-814 contacts ATP. 2 residues coordinate Mg(2+): Asp-808 and Asp-812. Helical transmembrane passes span Lys-863–Gly-882 and Ser-895–Leu-913. The tract at residues Asp-925 to Ser-949 is disordered.

This sequence belongs to the cation transport ATPase (P-type) (TC 3.A.3) family. Type IB subfamily. Expressed in the shoots and roots.

It localises to the plastid. It is found in the chloroplast membrane. It catalyses the reaction Cu(+)(in) + ATP + H2O = Cu(+)(out) + ADP + phosphate + H(+). Functionally, mediates copper transfer across the plastid envelope. Required for the delivery of copper into the plastid stroma, which is essential for the function of copper proteins. Seems to be selective for monovalent copper Cu(+) transport. Also plays a role in glucose signaling-mediated cell proliferation of root meristem in non-green tissues. The polypeptide is Copper-transporting ATPase PAA1, chloroplastic (PAA1) (Arabidopsis thaliana (Mouse-ear cress)).